The following is a 178-amino-acid chain: Transcription antitermination protein NusB (178 aa).

Belongs to the NusB family.

Involved in transcription antitermination. Required for transcription of ribosomal RNA (rRNA) genes. Binds specifically to the boxA antiterminator sequence of the ribosomal RNA (rrn) operons. The polypeptide is Transcription antitermination protein NusB (Alkalilimnicola ehrlichii (strain ATCC BAA-1101 / DSM 17681 / MLHE-1)).